Reading from the N-terminus, the 83-residue chain is Small ribosomal subunit protein bS16 (83 aa).

The protein belongs to the bacterial ribosomal protein bS16 family.

In Shewanella amazonensis (strain ATCC BAA-1098 / SB2B), this protein is Small ribosomal subunit protein bS16.